The chain runs to 88 residues: Small ribosomal subunit protein uS15 (88 aa).

This sequence belongs to the universal ribosomal protein uS15 family. In terms of assembly, part of the 30S ribosomal subunit. Forms a bridge to the 50S subunit in the 70S ribosome, contacting the 23S rRNA.

One of the primary rRNA binding proteins, it binds directly to 16S rRNA where it helps nucleate assembly of the platform of the 30S subunit by binding and bridging several RNA helices of the 16S rRNA. In terms of biological role, forms an intersubunit bridge (bridge B4) with the 23S rRNA of the 50S subunit in the ribosome. This chain is Small ribosomal subunit protein uS15, found in Acidobacterium capsulatum (strain ATCC 51196 / DSM 11244 / BCRC 80197 / JCM 7670 / NBRC 15755 / NCIMB 13165 / 161).